The following is a 425-amino-acid chain: Enolase (425 aa).

(2R)-2-phosphoglycerate is bound at residue Q164. The Proton donor role is filled by E208. D243, E286, and D312 together coordinate Mg(2+). (2R)-2-phosphoglycerate contacts are provided by K337, R366, S367, and K388. Residue K337 is the Proton acceptor of the active site.

It belongs to the enolase family. Mg(2+) serves as cofactor.

The protein localises to the cytoplasm. It is found in the secreted. It localises to the cell surface. It catalyses the reaction (2R)-2-phosphoglycerate = phosphoenolpyruvate + H2O. It functions in the pathway carbohydrate degradation; glycolysis; pyruvate from D-glyceraldehyde 3-phosphate: step 4/5. In terms of biological role, catalyzes the reversible conversion of 2-phosphoglycerate (2-PG) into phosphoenolpyruvate (PEP). It is essential for the degradation of carbohydrates via glycolysis. This chain is Enolase, found in Methanococcus aeolicus (strain ATCC BAA-1280 / DSM 17508 / OCM 812 / Nankai-3).